The following is a 316-amino-acid chain: Nod factor export ATP-binding protein I (316 aa).

The 231-residue stretch at 18 to 248 (IDFSDVSKTY…LIGCEVIEIY (231 aa)) folds into the ABC transporter domain. 50–57 (GPNGAGKS) serves as a coordination point for ATP.

This sequence belongs to the ABC transporter superfamily. Lipooligosaccharide exporter (TC 3.A.1.102) family. The complex is composed of two ATP-binding proteins (NodI) and two transmembrane proteins (NodJ).

Its subcellular location is the cell inner membrane. Functionally, part of the ABC transporter complex NodIJ involved in the export of the nodulation factors (Nod factors), the bacterial signal molecules that induce symbiosis and subsequent nodulation induction. Nod factors are LCO (lipo-chitin oligosaccharide), a modified beta-1,4-linked N-acetylglucosamine oligosaccharide. This subunit is responsible for energy coupling to the transport system. This chain is Nod factor export ATP-binding protein I, found in Rhizobium etli (strain ATCC 51251 / DSM 11541 / JCM 21823 / NBRC 15573 / CFN 42).